Consider the following 520-residue polypeptide: AMP-binding domain-containing enzyme iboA (520 aa).

180 to 191 (LTSGSTSGSPKV) contributes to the ATP binding site. Residues 397 to 447 (DGNFHTGDLFEKQLDGSYLFRGRGDDWIKSEDSRFIDTKAIEEKINDVCSD) carry the FACS motif.

The protein belongs to the ATP-dependent AMP-binding enzyme family. The cofactor is Mg(2+).

It participates in secondary metabolite biosynthesis. Functionally, AMP-binding domain-containing enzyme; part of the gene cluster that mediates the biosynthesis of the psychoactive metabolites ibotenic acid and muscimol. The first committed step is glutamate hydroxylation by the 2-oxoglutarate-dependent dioxygenase iboH, and the last step is decarboxylation of ibotenic acid to muscimol by the decarboxylase iboD. The order of the intermediate reactions is somewhat ambiguous. IboA likely activates the carboxylic acid at position 5 to introduce an amide bond, and the flavin monooxygenase iboF generates the N-O bond. There are several options for the latter step. One option is that iboF directly hydroxylates the amide nitrogen formed by iboA to produce a hydroxamic acid species. Another option is that iboF hydroxylates an external N-containing compound, whose resulting N-O bond is subsequently introduced into the hydroxyglutamate scaffold. The paralogous PLP-dependent cystathionine gamma-synthase-like enzymes iboG1 and iboG2 are likely involved in substitution of the OH group at position 3 by the O-N moiety. The first cyclic intermediate is most probably tricholomic acid which is likely desaturated to ibotenic acid by the cytochrome P450 monooxygenase iboC. This Amanita muscaria (strain Koide BX008) protein is AMP-binding domain-containing enzyme iboA.